The primary structure comprises 173 residues: Lipoprotein signal peptidase (173 aa).

3 helical membrane-spanning segments follow: residues 11-31 (FGLI…WIVT), 69-89 (TTRW…AFWM), and 93-113 (QAKG…GNIV). Residues aspartate 123 and aspartate 142 contribute to the active site. Residues 134–154 (PFMIFNVADACITIGVLLLVA) form a helical membrane-spanning segment.

The protein belongs to the peptidase A8 family.

Its subcellular location is the cell inner membrane. It catalyses the reaction Release of signal peptides from bacterial membrane prolipoproteins. Hydrolyzes -Xaa-Yaa-Zaa-|-(S,diacylglyceryl)Cys-, in which Xaa is hydrophobic (preferably Leu), and Yaa (Ala or Ser) and Zaa (Gly or Ala) have small, neutral side chains.. It participates in protein modification; lipoprotein biosynthesis (signal peptide cleavage). Its function is as follows. This protein specifically catalyzes the removal of signal peptides from prolipoproteins. This is Lipoprotein signal peptidase from Sphingopyxis alaskensis (strain DSM 13593 / LMG 18877 / RB2256) (Sphingomonas alaskensis).